Reading from the N-terminus, the 86-residue chain is Large ribosomal subunit protein bL28 (86 aa).

This sequence belongs to the bacterial ribosomal protein bL28 family.

In Bacteroides fragilis (strain ATCC 25285 / DSM 2151 / CCUG 4856 / JCM 11019 / LMG 10263 / NCTC 9343 / Onslow / VPI 2553 / EN-2), this protein is Large ribosomal subunit protein bL28.